The sequence spans 380 residues: MGIKGLAQVLSEHAPASVKHNDIKNYFGRKVAIDASMSLYQFLIQVRSQDGQQLMNEQGETTSHLMGMFYRTLRIVDNGIKPCFVFDGKPPTLKSGELAKRVARHQKAREDQEETKEVGTAEMVDRFAKRTVKVTRQHNDEAKRLLELMGIPFVNAPCEAEAQCAALARSGKVYAAASEDMDTLCFQAPVLLRHLTFSEQRKEPISEYNIEKALNGLDMSVEQFVDLCILLGCDYCEPIRGVGPARAVELIRQYGTLDRFVKEADRSKYPIPEDWPYEDARRLFLDAEVLPGEEIELKWKSPDADGIIQFLVKEKGFNEDRVKLGINRLEKASKTIPQGRLDSFFKPVPSSPKKPVDTKSKGSAKRKRDSNKGGESKKKR.

The N-domain stretch occupies residues 1–105 (MGIKGLAQVL…GELAKRVARH (105 aa)). Asp34 is a binding site for Mg(2+). Residues Arg47 and Arg71 each contribute to the DNA site. 5 residues coordinate Mg(2+): Asp87, Glu159, Glu161, Asp180, and Asp182. The I-domain stretch occupies residues 123–254 (MVDRFAKRTV…ARAVELIRQY (132 aa)). Glu159 is a binding site for DNA. Residues Gly232 and Asp234 each coordinate DNA. Asp234 is a binding site for Mg(2+). The segment at 337–345 (PQGRLDSFF) is interaction with PCNA. Residues 340–380 (RLDSFFKPVPSSPKKPVDTKSKGSAKRKRDSNKGGESKKKR) form a disordered region. The segment covering 342–353 (DSFFKPVPSSPK) has biased composition (low complexity). Residues Ser350 and Ser351 each carry the phosphoserine modification. The span at 370–380 (SNKGGESKKKR) shows a compositional bias: basic and acidic residues.

It belongs to the XPG/RAD2 endonuclease family. FEN1 subfamily. Interacts with PCNA. Three molecules of rad2 bind to one PCNA trimer with each molecule binding to one PCNA monomer. PCNA stimulates the nuclease activity without altering cleavage specificity. The cofactor is Mg(2+). In terms of processing, phosphorylated. Phosphorylation upon DNA damage induces relocalization to the nuclear plasma.

Its subcellular location is the nucleus. It localises to the nucleolus. The protein resides in the nucleoplasm. It is found in the mitochondrion. In terms of biological role, structure-specific nuclease with 5'-flap endonuclease and 5'-3' exonuclease activities involved in DNA replication and repair. During DNA replication, cleaves the 5'-overhanging flap structure that is generated by displacement synthesis when DNA polymerase encounters the 5'-end of a downstream Okazaki fragment. It enters the flap from the 5'-end and then tracks to cleave the flap base, leaving a nick for ligation. Also involved in the long patch base excision repair (LP-BER) pathway, by cleaving within the apurinic/apyrimidinic (AP) site-terminated flap. Acts as a genome stabilization factor that prevents flaps from equilibrating into structures that lead to duplications and deletions. Also possesses 5'-3' exonuclease activity on nicked or gapped double-stranded DNA, and exhibits RNase H activity. Also involved in replication and repair of rDNA and in repairing mitochondrial DNA. The chain is Flap endonuclease 1 from Schizosaccharomyces pombe (strain 972 / ATCC 24843) (Fission yeast).